Reading from the N-terminus, the 184-residue chain is ATP synthase subunit b (184 aa).

A helical membrane pass occupies residues 25 to 45 (IFPSWPIMLATLVSFTILLVV).

This sequence belongs to the ATPase B chain family. F-type ATPases have 2 components, F(1) - the catalytic core - and F(0) - the membrane proton channel. F(1) has five subunits: alpha(3), beta(3), gamma(1), delta(1), epsilon(1). F(0) has three main subunits: a(1), b(2) and c(10-14). The alpha and beta chains form an alternating ring which encloses part of the gamma chain. F(1) is attached to F(0) by a central stalk formed by the gamma and epsilon chains, while a peripheral stalk is formed by the delta and b chains.

The protein resides in the cell membrane. Its function is as follows. F(1)F(0) ATP synthase produces ATP from ADP in the presence of a proton or sodium gradient. F-type ATPases consist of two structural domains, F(1) containing the extramembraneous catalytic core and F(0) containing the membrane proton channel, linked together by a central stalk and a peripheral stalk. During catalysis, ATP synthesis in the catalytic domain of F(1) is coupled via a rotary mechanism of the central stalk subunits to proton translocation. In terms of biological role, component of the F(0) channel, it forms part of the peripheral stalk, linking F(1) to F(0). The chain is ATP synthase subunit b from Mycoplasma mobile (strain ATCC 43663 / 163K / NCTC 11711) (Mesomycoplasma mobile).